Here is a 520-residue protein sequence, read N- to C-terminus: Laccase-2 (520 aa).

The signal sequence occupies residues 1-19 (MRFSNAFVLVAACISSVLA). 3 consecutive Plastocyanin-like domains span residues 21-145 (TKTF…FVVY), 157-305 (VDDE…LTLA), and 375-488 (TVPV…FAEA). Cu cation is bound by residues H82 and H84. Disulfide bonds link C103–C509 and C135–C229. N108 is a glycosylation site (N-linked (GlcNAc...) asparagine). Cu cation is bound by residues H127 and H129. Residues N241 and N299 are each glycosylated (N-linked (GlcNAc...) asparagine). H417, H420, H422, H470, C471, H472, and H476 together coordinate Cu cation. N-linked (GlcNAc...) asparagine glycosylation occurs at N492.

Belongs to the multicopper oxidase family. Requires Cu cation as cofactor.

The protein localises to the secreted. It carries out the reaction 4 hydroquinone + O2 = 4 benzosemiquinone + 2 H2O. Lignin degradation and detoxification of lignin-derived products. The polypeptide is Laccase-2 (lcc2) (Agaricus bisporus (White button mushroom)).